A 715-amino-acid polypeptide reads, in one-letter code: DNA ligase (715 aa).

NAD(+)-binding positions include 47–51 (DADYD), 96–97 (SL), and glutamate 128. The active-site N6-AMP-lysine intermediate is lysine 130. NAD(+)-binding residues include arginine 151, glutamate 188, lysine 306, and lysine 330. The Zn(2+) site is built by cysteine 435, cysteine 438, cysteine 453, and cysteine 459. Residues 637–715 (RRDTAVAGKT…EDEWLALIGN (79 aa)) enclose the BRCT domain.

The protein belongs to the NAD-dependent DNA ligase family. LigA subfamily. Mg(2+) is required as a cofactor. It depends on Mn(2+) as a cofactor.

It carries out the reaction NAD(+) + (deoxyribonucleotide)n-3'-hydroxyl + 5'-phospho-(deoxyribonucleotide)m = (deoxyribonucleotide)n+m + AMP + beta-nicotinamide D-nucleotide.. Functionally, DNA ligase that catalyzes the formation of phosphodiester linkages between 5'-phosphoryl and 3'-hydroxyl groups in double-stranded DNA using NAD as a coenzyme and as the energy source for the reaction. It is essential for DNA replication and repair of damaged DNA. This chain is DNA ligase, found in Rhodopseudomonas palustris (strain TIE-1).